The sequence spans 427 residues: Serine hydroxymethyltransferase (427 aa).

(6S)-5,6,7,8-tetrahydrofolate contacts are provided by residues L122 and 126-128 (GHL). Position 231 is an N6-(pyridoxal phosphate)lysine (K231).

The protein belongs to the SHMT family. Homodimer. It depends on pyridoxal 5'-phosphate as a cofactor.

Its subcellular location is the cytoplasm. The enzyme catalyses (6R)-5,10-methylene-5,6,7,8-tetrahydrofolate + glycine + H2O = (6S)-5,6,7,8-tetrahydrofolate + L-serine. It functions in the pathway one-carbon metabolism; tetrahydrofolate interconversion. It participates in amino-acid biosynthesis; glycine biosynthesis; glycine from L-serine: step 1/1. In terms of biological role, catalyzes the reversible interconversion of serine and glycine with tetrahydrofolate (THF) serving as the one-carbon carrier. This reaction serves as the major source of one-carbon groups required for the biosynthesis of purines, thymidylate, methionine, and other important biomolecules. Also exhibits THF-independent aldolase activity toward beta-hydroxyamino acids, producing glycine and aldehydes, via a retro-aldol mechanism. This is Serine hydroxymethyltransferase from Acidobacterium capsulatum (strain ATCC 51196 / DSM 11244 / BCRC 80197 / JCM 7670 / NBRC 15755 / NCIMB 13165 / 161).